The sequence spans 662 residues: A-kinase anchor protein 10, mitochondrial (662 aa).

The N-terminal 28 residues, 1 to 28, are a transit peptide targeting the mitochondrion; the sequence is MRGAGPSPRHSPRALRPDPGPAMSFFRR. 3 disordered regions span residues 1–55, 178–205, and 242–280; these read MRGA…SPQK, KQSSLAEPVSPSKRHETPASSVTEALDR, and GHSARSLHREVARTGSHQIPTDSQDSSSRLAVGSRNSCS. Residues 32 to 43 are compositionally biased toward basic and acidic residues; the sequence is GKEQEKTLDVKS. Residues Ser52 and Ser189 each carry the phosphoserine modification. RGS domains are found at residues 125–369 and 379–505; these read TLEQ…CKYQ and YLAD…YKYL. Positions 256-280 are enriched in polar residues; it reads GSHQIPTDSQDSSSRLAVGSRNSCS. Residue Ser281 is modified to Phosphoserine. The segment at 634–647 is PKA-RII subunit binding; that stretch reads LAWKIAKMIVSDVM.

As to expression, highly expressed in testis, kidney and lung, followed by brain, skeletal muscle, liver, spleen and heart. Also expressed in brown adipose tissue and pancreas.

The protein localises to the mitochondrion. Its subcellular location is the membrane. It is found in the cytoplasm. Its function is as follows. Differentially targeted protein that binds to type I and II regulatory subunits of protein kinase A and anchors them to the mitochondria or the plasma membrane. Although the physiological relevance between PKA and AKAPS with mitochondria is not fully understood, one idea is that BAD, a proapoptotic member, is phosphorylated and inactivated by mitochondria-anchored PKA. It cannot be excluded too that it may facilitate PKA as well as G protein signal transduction, by acting as an adapter for assembling multiprotein complexes. With its RGS domain, it could lead to the interaction to G-alpha proteins, providing a link between the signaling machinery and the downstream kinase. The sequence is that of A-kinase anchor protein 10, mitochondrial (Akap10) from Mus musculus (Mouse).